The primary structure comprises 353 residues: Photosystem II D2 protein (353 aa).

An N-acetylthreonine modification is found at Thr-2. A Phosphothreonine modification is found at Thr-2. A helical membrane pass occupies residues 41–61 (CAYFALGGWFTGTTFVTSWYT). His-118 provides a ligand contact to chlorophyll a. A helical transmembrane segment spans residues 125 to 141 (GFMLRQFELARSVQLRP). The pheophytin a site is built by Gln-130 and Asn-143. A helical transmembrane segment spans residues 153-166 (VFVSVFLIYPLGQS). His-198 contributes to the chlorophyll a binding site. Residues 208–228 (AALLCAIHGATVENTLFEDGD) traverse the membrane as a helical segment. 2 residues coordinate a plastoquinone: His-215 and Phe-262. His-215 serves as a coordination point for Fe cation. His-269 contributes to the Fe cation binding site. The helical transmembrane segment at 279-295 (GLWMSALGVVGLALNLR) threads the bilayer.

It belongs to the reaction center PufL/M/PsbA/D family. In terms of assembly, PSII is composed of 1 copy each of membrane proteins PsbA, PsbB, PsbC, PsbD, PsbE, PsbF, PsbH, PsbI, PsbJ, PsbK, PsbL, PsbM, PsbT, PsbX, PsbY, PsbZ, Psb30/Ycf12, at least 3 peripheral proteins of the oxygen-evolving complex and a large number of cofactors. It forms dimeric complexes. Requires The D1/D2 heterodimer binds P680, chlorophylls that are the primary electron donor of PSII, and subsequent electron acceptors. It shares a non-heme iron and each subunit binds pheophytin, quinone, additional chlorophylls, carotenoids and lipids. There is also a Cl(-1) ion associated with D1 and D2, which is required for oxygen evolution. The PSII complex binds additional chlorophylls, carotenoids and specific lipids. as cofactor.

The protein localises to the plastid. It is found in the chloroplast thylakoid membrane. It carries out the reaction 2 a plastoquinone + 4 hnu + 2 H2O = 2 a plastoquinol + O2. Functionally, photosystem II (PSII) is a light-driven water:plastoquinone oxidoreductase that uses light energy to abstract electrons from H(2)O, generating O(2) and a proton gradient subsequently used for ATP formation. It consists of a core antenna complex that captures photons, and an electron transfer chain that converts photonic excitation into a charge separation. The D1/D2 (PsbA/PsbD) reaction center heterodimer binds P680, the primary electron donor of PSII as well as several subsequent electron acceptors. D2 is needed for assembly of a stable PSII complex. The chain is Photosystem II D2 protein from Olimarabidopsis pumila (Dwarf rocket).